The following is a 299-amino-acid chain: MQENTRLRIAIQKSGRLSKESIELLSECGVKMHIHEQSLIAFSTNLPIDILRVRDDDIPGLIFDGVVDLGIIGENVLEENELERQSLGENPSYKLLKKLDFGYCRLSLALPQENKFQNLKDFEGLRIATSYPQLLKRFMKENGINYKNCMLTGSVEVAPRANLADAICDLVSSGATLQANNLKEVKVIYESRACLIQKENALSKEKQALVDKIMLRVAGVMQARESKYIMLHAPKEKLDKIQALLPGVERPTILPLAHDEKNVALHMVSKENLFWETMEALKEEGASSILVLPIEKMLK.

The protein belongs to the ATP phosphoribosyltransferase family. Long subfamily. Mg(2+) is required as a cofactor.

Its subcellular location is the cytoplasm. The enzyme catalyses 1-(5-phospho-beta-D-ribosyl)-ATP + diphosphate = 5-phospho-alpha-D-ribose 1-diphosphate + ATP. It participates in amino-acid biosynthesis; L-histidine biosynthesis; L-histidine from 5-phospho-alpha-D-ribose 1-diphosphate: step 1/9. Its activity is regulated as follows. Feedback inhibited by histidine. Catalyzes the condensation of ATP and 5-phosphoribose 1-diphosphate to form N'-(5'-phosphoribosyl)-ATP (PR-ATP). Has a crucial role in the pathway because the rate of histidine biosynthesis seems to be controlled primarily by regulation of HisG enzymatic activity. The sequence is that of ATP phosphoribosyltransferase from Campylobacter jejuni subsp. jejuni serotype O:6 (strain 81116 / NCTC 11828).